We begin with the raw amino-acid sequence, 487 residues long: Probable cobyric acid synthase (487 aa).

Positions 249 to 435 constitute a GATase cobBQ-type domain; that stretch reads DVDIAVVRFP…LHGIFNNASF (187 aa). The active-site Nucleophile is the C328. The active site involves H427.

Belongs to the CobB/CobQ family. CobQ subfamily.

It participates in cofactor biosynthesis; adenosylcobalamin biosynthesis. Catalyzes amidations at positions B, D, E, and G on adenosylcobyrinic A,C-diamide. NH(2) groups are provided by glutamine, and one molecule of ATP is hydrogenolyzed for each amidation. This Methanocella arvoryzae (strain DSM 22066 / NBRC 105507 / MRE50) protein is Probable cobyric acid synthase.